The following is a 156-amino-acid chain: Cyclin-dependent protein kinase inhibitor SMR10 (156 aa).

The interval 52–90 is disordered; it reads QDQDLEPKSQETNNCSRKEGATVKKEEEEEDDYCKTPTR. The segment covering 67–77 has biased composition (basic and acidic residues); sequence SRKEGATVKKE.

Probable cyclin-dependent protein kinase (CDK) inhibitor that functions as a repressor of mitosis in the endoreduplication cell cycle. This is Cyclin-dependent protein kinase inhibitor SMR10 from Arabidopsis thaliana (Mouse-ear cress).